The chain runs to 358 residues: UPF0421 protein BT9727_2513 (358 aa).

Helical transmembrane passes span 19-39 (IAVF…IFAV), 74-94 (FTFF…FTIV), 109-129 (TLTA…AFLI), and 131-151 (LATT…ILPP).

This sequence belongs to the UPF0421 family.

The protein localises to the cell membrane. In Bacillus thuringiensis subsp. konkukian (strain 97-27), this protein is UPF0421 protein BT9727_2513.